The sequence spans 274 residues: MMPLLLLILLSTRNLLGAAQSQESPVAGERRALDLTTVYVLPRSEPINATVEHKCREALASCYNGSEFQPLHDDGPIRPDPYRFSTMIRFKRSYGELPLPIELNDEFLEQLSLLHNNTDQLRVLLTLMRTSRASDWMSFLGGYTQCDAPKSVVFTCVESVCYEHDLMRLNYTTDLFTENVLGLDVSPPVLSVLVLLRNNHTKAESVVRVPTSSMSMLDGTYNLLRTILGHMSLDTDLIGVLRSYRDRFPAVFSVSDQIKITRQHYRPQYQRKRP.

An N-terminal signal peptide occupies residues 1-21 (MMPLLLLILLSTRNLLGAAQS). Residues 51-251 (VEHKCREALA…RSYRDRFPAV (201 aa)) form the gL betaherpesvirus-type domain. C156 and C161 form a disulfide bridge.

This sequence belongs to the herpesviridae glycoprotein L (gL) family. Betaherpesvirinae gL subfamily. In terms of assembly, interacts with glycoprotein H (gH); this interaction is necessary for the correct processing and cell surface expression of gH.

It localises to the virion membrane. The protein localises to the host cell membrane. Its subcellular location is the host Golgi apparatus. It is found in the host trans-Golgi network. The heterodimer glycoprotein H-glycoprotein L is required for the fusion of viral and plasma membranes leading to virus entry into the host cell. Acts as a functional inhibitor of gH and maintains gH in an inhibited form. Upon binding to host integrins, gL dissociates from gH leading to activation of the viral fusion glycoproteins gB and gH. The protein is Envelope glycoprotein L of Mus musculus (Mouse).